We begin with the raw amino-acid sequence, 249 residues long: Phosphoadenosine 5'-phosphosulfate reductase (249 aa).

The Nucleophile; cysteine thiosulfonate intermediate role is filled by cysteine 230.

This sequence belongs to the PAPS reductase family. CysH subfamily.

Its subcellular location is the cytoplasm. It carries out the reaction [thioredoxin]-disulfide + sulfite + adenosine 3',5'-bisphosphate + 2 H(+) = [thioredoxin]-dithiol + 3'-phosphoadenylyl sulfate. The protein operates within sulfur metabolism; hydrogen sulfide biosynthesis; sulfite from sulfate: step 3/3. Catalyzes the formation of sulfite from phosphoadenosine 5'-phosphosulfate (PAPS) using thioredoxin as an electron donor. The polypeptide is Phosphoadenosine 5'-phosphosulfate reductase (Synechocystis sp. (strain ATCC 27184 / PCC 6803 / Kazusa)).